Reading from the N-terminus, the 183-residue chain is Large ribosomal subunit protein eL18 (183 aa).

A disordered region spans residues 151 to 183; it reads HFGPAPGAPRSHTKPYVRSKGHEQAKPSRRSNV.

The protein belongs to the eukaryotic ribosomal protein eL18 family.

It is found in the cytoplasm. In Plutella xylostella (Diamondback moth), this protein is Large ribosomal subunit protein eL18 (RpL18).